Here is a 414-residue protein sequence, read N- to C-terminus: Gamma-glutamyl phosphate reductase (414 aa).

This sequence belongs to the gamma-glutamyl phosphate reductase family.

The protein resides in the cytoplasm. The enzyme catalyses L-glutamate 5-semialdehyde + phosphate + NADP(+) = L-glutamyl 5-phosphate + NADPH + H(+). The protein operates within amino-acid biosynthesis; L-proline biosynthesis; L-glutamate 5-semialdehyde from L-glutamate: step 2/2. Catalyzes the NADPH-dependent reduction of L-glutamate 5-phosphate into L-glutamate 5-semialdehyde and phosphate. The product spontaneously undergoes cyclization to form 1-pyrroline-5-carboxylate. The protein is Gamma-glutamyl phosphate reductase of Clostridium botulinum (strain Eklund 17B / Type B).